The following is a 267-amino-acid chain: Indole-3-glycerol phosphate synthase 1 (267 aa).

The protein belongs to the TrpC family.

The enzyme catalyses 1-(2-carboxyphenylamino)-1-deoxy-D-ribulose 5-phosphate + H(+) = (1S,2R)-1-C-(indol-3-yl)glycerol 3-phosphate + CO2 + H2O. It functions in the pathway amino-acid biosynthesis; L-tryptophan biosynthesis; L-tryptophan from chorismate: step 4/5. This is Indole-3-glycerol phosphate synthase 1 (trpC1) from Ralstonia nicotianae (strain ATCC BAA-1114 / GMI1000) (Ralstonia solanacearum).